The chain runs to 349 residues: Core protein VP7 (349 aa).

A glycan (N-linked (GlcNAc...) asparagine; by host) is linked at asparagine 287.

It belongs to the orbivirus VP7 family. In terms of assembly, homotrimer that assemble in a complex of 260 capsomers on an inner scaffold composed of VP3.

Its subcellular location is the virion. The VP7 protein is one of the five proteins (with VP1, VP3, VP4, and VP6) which form the inner capsid of the virus. The sequence is that of Core protein VP7 (Segment-7) from Antilocapra americana (Pronghorn).